The sequence spans 232 residues: MKKVLFYVLPFAFFGCSATVDPQISMKPPAYVEELAPKQSNNVESAPGSLFGKGDNPLFSDKKAMNVNDLVTVVIQESTTQSTQANKATSRTNTSNLGGGALTGSSGVVANALNKVNAYSNIGFQTNSSNNYTGTGSQSRNESFNTTISTRVIKILSNGNYFIEGSRELLINGEKQIIQLSGVIRPYDIGQDNTIDSKYIADAKILYKTEGEVDRSTRKPWGSKVIEAIWPF.

Residues 1–15 form the signal peptide; the sequence is MKKVLFYVLPFAFFG. The N-palmitoyl cysteine moiety is linked to residue Cys16. Cys16 carries S-diacylglycerol cysteine lipidation.

This sequence belongs to the FlgH family. In terms of assembly, the basal body constitutes a major portion of the flagellar organelle and consists of four rings (L,P,S, and M) mounted on a central rod.

The protein localises to the cell outer membrane. The protein resides in the bacterial flagellum basal body. In terms of biological role, assembles around the rod to form the L-ring and probably protects the motor/basal body from shearing forces during rotation. This chain is Flagellar L-ring protein, found in Campylobacter jejuni subsp. jejuni serotype O:6 (strain 81116 / NCTC 11828).